A 270-amino-acid chain; its full sequence is Putative hydro-lyase Noca_0093 (270 aa).

The protein belongs to the D-glutamate cyclase family.

The sequence is that of Putative hydro-lyase Noca_0093 from Nocardioides sp. (strain ATCC BAA-499 / JS614).